We begin with the raw amino-acid sequence, 711 residues long: Hydroperoxide isomerase ALOXE3 (711 aa).

The PLAT domain occupies 2–119 (AVYRLCVTTG…TVELRPGTAR (118 aa)). Residues 119–711 (RTICQDALPL…PPLIENSVSI (593 aa)) form the Lipoxygenase domain. 5 residues coordinate Fe cation: H408, H413, H588, N592, and I711.

This sequence belongs to the lipoxygenase family. Requires Fe cation as cofactor.

The protein localises to the cytoplasm. It carries out the reaction a hydroperoxyeicosatetraenoate = a hydroxy-epoxy-eicosatetraenoate. The catalysed reaction is a hydroperoxyeicosatetraenoate = an oxoeicosatetraenoate + H2O. The enzyme catalyses (12R)-hydroperoxy-(5Z,8Z,10E,14Z)-eicosatetraenoate = (8R)-hydroxy-(11R,12R)-epoxy-(5Z,9E,14Z)-eicosatrienoate. It catalyses the reaction (12S)-hydroperoxy-(5Z,8Z,10E,14Z)-eicosatetraenoate = (8R)-hydroxy-(11S,12S)-epoxy-(5Z,9E,14Z)-eicosatrienoate. It carries out the reaction (12S)-hydroperoxy-(5Z,8Z,10E,14Z)-eicosatetraenoate = (10R)-hydroxy-(11S,12S)-epoxy-(5Z,8Z,14Z)-eicosatrienoate. The catalysed reaction is (15S)-hydroperoxy-(5Z,8Z,11Z,13E)-eicosatetraenoate = (13R)-hydroxy-(14S,15S)-epoxy-(5Z,8Z,11Z)-eicosatrienoate. The enzyme catalyses (5S)-hydroperoxy-(6E,8Z,11Z,14Z)-eicosatetraenoate = 7R-hydroxy-5S,6S-epoxy-(8Z,11Z,14Z)-eicosatrienoate. It catalyses the reaction (13S)-hydroperoxy-(9Z,11E)-octadecadienoate = 11-hydroxy-(12S,13S)-epoxy-(9Z)-octadecenoate. It carries out the reaction N-[omega-(9R)-hydroperoxy-(10E,12Z)-octadecadienoyloxy]acyl-beta-D-glucosyl-(1&lt;-&gt;1)-octadecasphing-4E-enine = a N-[omega-(9R,10R)-epoxy-(13R)-hydroxy-(11E)-octadecenoyloxy]acyl-beta-D-glucosyl-(1&lt;-&gt;1)-sphing-4E-enine. The catalysed reaction is a N-[omega-(9R)-hydroperoxy-(10E,12Z)-octadecadienoyloxy]-acylsphin-4E-enine = a N-[omega-(9R,10R)-epoxy-(13R)-hydroxy-(11E)-octadecenoyloxy]-acylsphing-4E-enine. The enzyme catalyses (12R)-hydroperoxy-(5Z,8Z,10E,14Z)-eicosatetraenoate = 12-oxo-(5Z,8Z,10E,14Z)-eicosatetraenoate + H2O. It catalyses the reaction (12S)-hydroperoxy-(5Z,8Z,10E,14Z)-eicosatetraenoate = 12-oxo-(5Z,8Z,10E,14Z)-eicosatetraenoate + H2O. It carries out the reaction (15S)-hydroperoxy-(5Z,8Z,11Z,13E)-eicosatetraenoate = 15-oxo-(5Z,8Z,11Z,13E)-eicosatetraenoate + H2O. The catalysed reaction is (13S)-hydroperoxy-(9Z,11E)-octadecadienoate = 13-oxo-(9Z,11E)-octadecadienoate + H2O. The enzyme catalyses (8S)-hydroperoxy-(5Z,9E,11Z,14Z)-eicosatetraenoate = (10R)-hydroxy-(8S,9S)-epoxy-(5Z,11Z,14Z)-eicosatrienoate. It catalyses the reaction (8R)-hydroperoxy-(5Z,9E,11Z,14Z)-eicosatetraenoate = 8-oxo-(5Z,9E,11Z,14Z)-eicosatetraenoate + H2O. It carries out the reaction (8S)-hydroperoxy-(5Z,9E,11Z,14Z)-eicosatetraenoate = 8-oxo-(5Z,9E,11Z,14Z)-eicosatetraenoate + H2O. Its pathway is lipid metabolism; hydroperoxy eicosatetraenoic acid biosynthesis. The protein operates within lipid metabolism; sphingolipid metabolism. Functionally, non-heme iron-containing lipoxygenase which is atypical in that it displays a prominent hydroperoxide isomerase activity and a reduced lipoxygenases activity. The hydroperoxide isomerase activity catalyzes the isomerization of hydroperoxides, derived from arachidonic and linoleic acid by ALOX12B, into hepoxilin-type epoxyalcohols and ketones. In presence of oxygen, oxygenates polyunsaturated fatty acids, including arachidonic acid, to produce fatty acid hydroperoxides. In the skin, acts downstream of ALOX12B on the linoleate moiety of esterified omega-hydroxyacyl-sphingosine (EOS) ceramides to produce an epoxy-ketone derivative, a crucial step in the conjugation of omega-hydroxyceramide to membrane proteins. Therefore plays a crucial role in the synthesis of corneocytes lipid envelope and the establishment of the skin barrier to water loss. In parallel, it may have a signaling function in barrier formation through the production of hepoxilins metabolites. Also plays a role in adipocyte differentiation through hepoxilin A3 and hepoxilin B3 production which in turn activate PPARG. Through the production of hepoxilins in the spinal cord, it may regulate inflammatory tactile allodynia. The protein is Hydroperoxide isomerase ALOXE3 of Rattus norvegicus (Rat).